The following is a 1019-amino-acid chain: Insulin-degrading enzyme (1019 aa).

Position 108 (His-108) interacts with Zn(2+). The active-site Proton acceptor is the Glu-111. The Zn(2+) site is built by His-112 and Glu-189. Position 192 is an N6-succinyllysine (Lys-192). 359 to 363 (LVGGQ) is a binding site for substrate. Arg-429 is a binding site for ATP. The residue at position 697 (Lys-697) is an N6-succinyllysine. The SlyX motif signature appears at 853-858 (EKPPHY). 895-901 (DKPKKLS) contacts ATP.

Belongs to the peptidase M16 family. In terms of assembly, homodimer. Can also form homotetramers. Zn(2+) is required as a cofactor. In terms of tissue distribution, detected in brain and liver (at protein level). Detected in liver.

It localises to the cytoplasm. It is found in the cytosol. The protein localises to the cell membrane. The protein resides in the secreted. It carries out the reaction Degradation of insulin, glucagon and other polypeptides. No action on proteins.. Its activity is regulated as follows. Activated by ATP, other nucleotide triphosphates and small peptides. Inhibited by bacitracin. Its function is as follows. Plays a role in the cellular breakdown of insulin, APP peptides, IAPP peptides, natriuretic peptides, glucagon, bradykinin, kallidin, and other peptides, and thereby plays a role in intercellular peptide signaling. Substrate binding induces important conformation changes, making it possible to bind and degrade larger substrates, such as insulin. Contributes to the regulation of peptide hormone signaling cascades and regulation of blood glucose homeostasis via its role in the degradation of insulin, glucagon and IAPP. Plays a role in the degradation and clearance of APP-derived amyloidogenic peptides that are secreted by neurons and microglia. Degrades the natriuretic peptides ANP, BNP and CNP, inactivating their ability to raise intracellular cGMP. Also degrades an aberrant frameshifted 40-residue form of NPPA (fsNPPA) which is associated with familial atrial fibrillation in heterozygous patients. Involved in antigen processing. Produces both the N terminus and the C terminus of MAGEA3-derived antigenic peptide (EVDPIGHLY) that is presented to cytotoxic T lymphocytes by MHC class I. In Mus musculus (Mouse), this protein is Insulin-degrading enzyme (Ide).